The following is a 1373-amino-acid chain: DNA-directed RNA polymerase subunit beta (1373 aa).

This sequence belongs to the RNA polymerase beta chain family. In terms of assembly, the RNAP catalytic core consists of 2 alpha, 1 beta, 1 beta' and 1 omega subunit. When a sigma factor is associated with the core the holoenzyme is formed, which can initiate transcription.

It carries out the reaction RNA(n) + a ribonucleoside 5'-triphosphate = RNA(n+1) + diphosphate. In terms of biological role, DNA-dependent RNA polymerase catalyzes the transcription of DNA into RNA using the four ribonucleoside triphosphates as substrates. This Rickettsia massiliae (strain Mtu5) protein is DNA-directed RNA polymerase subunit beta.